The primary structure comprises 738 residues: DNA topoisomerase 4 subunit A (738 aa).

The Topo IIA-type catalytic domain occupies 32–496; that stretch reads LPDVRDGLKP…SFEEVDLTNQ (465 aa). The O-(5'-phospho-DNA)-tyrosine intermediate role is filled by Tyr120.

The protein belongs to the type II topoisomerase GyrA/ParC subunit family. ParC type 1 subfamily. Heterotetramer composed of ParC and ParE.

It localises to the cell membrane. It catalyses the reaction ATP-dependent breakage, passage and rejoining of double-stranded DNA.. Functionally, topoisomerase IV is essential for chromosome segregation. It relaxes supercoiled DNA. Performs the decatenation events required during the replication of a circular DNA molecule. The sequence is that of DNA topoisomerase 4 subunit A from Rickettsia prowazekii (strain Madrid E).